The sequence spans 474 residues: Bifunctional protein HldE (474 aa).

The tract at residues 1-318 (MKLSMPRFDQ…RAIQREEGSE (318 aa)) is ribokinase. 194 to 197 (NLSE) is a binding site for ATP. Asp263 is an active-site residue. The segment at 343–474 (FTNGCFDILH…AIVEKIRKSE (132 aa)) is cytidylyltransferase.

This sequence in the N-terminal section; belongs to the carbohydrate kinase PfkB family. The protein in the C-terminal section; belongs to the cytidylyltransferase family. As to quaternary structure, homodimer.

The catalysed reaction is D-glycero-beta-D-manno-heptose 7-phosphate + ATP = D-glycero-beta-D-manno-heptose 1,7-bisphosphate + ADP + H(+). It carries out the reaction D-glycero-beta-D-manno-heptose 1-phosphate + ATP + H(+) = ADP-D-glycero-beta-D-manno-heptose + diphosphate. It participates in nucleotide-sugar biosynthesis; ADP-L-glycero-beta-D-manno-heptose biosynthesis; ADP-L-glycero-beta-D-manno-heptose from D-glycero-beta-D-manno-heptose 7-phosphate: step 1/4. It functions in the pathway nucleotide-sugar biosynthesis; ADP-L-glycero-beta-D-manno-heptose biosynthesis; ADP-L-glycero-beta-D-manno-heptose from D-glycero-beta-D-manno-heptose 7-phosphate: step 3/4. In terms of biological role, catalyzes the phosphorylation of D-glycero-D-manno-heptose 7-phosphate at the C-1 position to selectively form D-glycero-beta-D-manno-heptose-1,7-bisphosphate. Its function is as follows. Catalyzes the ADP transfer from ATP to D-glycero-beta-D-manno-heptose 1-phosphate, yielding ADP-D-glycero-beta-D-manno-heptose. This Pseudomonas fluorescens (strain Pf0-1) protein is Bifunctional protein HldE.